We begin with the raw amino-acid sequence, 193 residues long: MQQYVKNDGNKYIIQMHRGKAIEMKRFMNFQSGSPTFNCCAPPPASFFPLLRSSSFLPLPASSFLHLHSSCFSLPASFFPLLRSSSFLHLHSSYFLHLHSSSFLLLPASSSLLLPSSFSPLPPASSFLLLPSFSSLLLPSFSSLPLPSFSFLLLPSSSFPLLPSSSSPLPPSSSSPSAFFLQVTWHKHSPRIQ.

This is an uncharacterized protein from Saccharomyces cerevisiae (strain ATCC 204508 / S288c) (Baker's yeast).